A 440-amino-acid chain; its full sequence is Glycerol-3-phosphate dehydrogenase [NAD(+)], chloroplastic (440 aa).

The transit peptide at 1–47 (MAAAAAATFLPHTPTPRRRLAVAVHSPTRRRLSLVFSGPPDGALSVA) directs the protein to the chloroplast. Residues 57-76 (EEAAAAVSAPRGGGGGGGKE) are disordered. NAD(+) contacts are provided by residues 114–119 (GGGSFG), Phe-191, Lys-214, and Ala-248. Residue Lys-214 participates in substrate binding. The Proton acceptor role is filled by Lys-299. The NAD(+) site is built by Arg-363 and Glu-389. Residue 363-364 (RN) coordinates substrate.

It belongs to the NAD-dependent glycerol-3-phosphate dehydrogenase family.

It localises to the plastid. The protein localises to the chloroplast. It catalyses the reaction sn-glycerol 3-phosphate + NAD(+) = dihydroxyacetone phosphate + NADH + H(+). Its pathway is membrane lipid metabolism; glycerophospholipid metabolism. In terms of biological role, required to supply glycerol-3-phosphate in the chloroplast for the synthesis of glycerolipids. The polypeptide is Glycerol-3-phosphate dehydrogenase [NAD(+)], chloroplastic (Oryza sativa subsp. japonica (Rice)).